Consider the following 350-residue polypeptide: Small ribosomal subunit protein uS3 (350 aa).

In terms of domain architecture, KH type-2 spans 38–106 (IRKMMSRGME…QVQLNILEVK (69 aa)). The tract at residues 211–350 (AEREAQEALQ…TPGTPEKAEE (140 aa)) is disordered. Residues 222 to 232 (QTRRDRPRRGP) are compositionally biased toward basic residues. Over residues 261 to 350 (NAPAAETAAS…TPGTPEKAEE (90 aa)) the composition is skewed to low complexity.

This sequence belongs to the universal ribosomal protein uS3 family. In terms of assembly, part of the 30S ribosomal subunit. Forms a tight complex with proteins S10 and S14.

Its function is as follows. Binds the lower part of the 30S subunit head. Binds mRNA in the 70S ribosome, positioning it for translation. In Frankia alni (strain DSM 45986 / CECT 9034 / ACN14a), this protein is Small ribosomal subunit protein uS3.